Reading from the N-terminus, the 471-residue chain is (13S,14R)-1,13-dihydroxy-N-methylcanadine 13-O-acetyltransferase AT1 (471 aa).

Belongs to the plant acyltransferase family.

It carries out the reaction (13S,14R)-1,13-dihydroxy-N-methylcanadine + acetyl-CoA = (13S,14R)-13-O-acetyl-1-hydroxy-N-methylcanadine + CoA. It functions in the pathway alkaloid biosynthesis. In terms of biological role, acetyltransferase involved in the biosynthesis of the benzylisoquinoline alkaloid noscapine. Converts (13S,14R)-1,13-dihydroxy-N-methylcanadine to (13S,14R)-13-O-acetyl-1-hydroxy-N-methylcanadine. The chain is (13S,14R)-1,13-dihydroxy-N-methylcanadine 13-O-acetyltransferase AT1 from Papaver somniferum (Opium poppy).